The chain runs to 165 residues: Shikimate kinase (165 aa).

ATP is bound at residue 12–17 (GCGKST). S16 serves as a coordination point for Mg(2+). Substrate-binding residues include D34, R57, and G79. R116 serves as a coordination point for ATP. R133 contributes to the substrate binding site.

It belongs to the shikimate kinase family. As to quaternary structure, monomer. The cofactor is Mg(2+).

It localises to the cytoplasm. The catalysed reaction is shikimate + ATP = 3-phosphoshikimate + ADP + H(+). It participates in metabolic intermediate biosynthesis; chorismate biosynthesis; chorismate from D-erythrose 4-phosphate and phosphoenolpyruvate: step 5/7. In terms of biological role, catalyzes the specific phosphorylation of the 3-hydroxyl group of shikimic acid using ATP as a cosubstrate. The protein is Shikimate kinase of Clostridium botulinum (strain Eklund 17B / Type B).